The sequence spans 269 residues: 4-hydroxy-4-methyl-2-oxoglutarate aldolase cghB (269 aa).

His-48 serves as the catalytic Proton acceptor. A divalent metal cation is bound by residues Glu-155 and Asp-181. Asp-181 is a binding site for substrate.

Belongs to the HpcH/HpaI aldolase family. Homohexamer; trimer of dimers. It depends on Co(2+) as a cofactor. The cofactor is Mn(2+). Zn(2+) serves as cofactor. Fe(2+) is required as a cofactor. Requires Mg(2+) as cofactor.

The enzyme catalyses 4-hydroxy-4-methyl-2-oxoglutarate = 2 pyruvate. Its pathway is secondary metabolite biosynthesis. Functionally, 4-hydroxy-4-methyl-2-oxoglutarate aldolase; part of the gene cluster that mediates the biosynthesis of the tetramic acid Sch210972, a potential anti-HIV fungal natural product that contains a decalin core. The PKS module of cghG together with the enoylreductase cghC catalyze the formation of the polyketide unit which is then conjugated to 4-hydroxyl-4-methyl glutamate (HMG) by the condensation domain of the cghG NRPS module. One unique structural feature of Sch210972 is the tetramic acid motif proposed to be derived from the non-proteinogenic amino acid HMG, by a Dieckmann-type condensation catalyzed by the reductase domain of cghG. The aldolase cghB catalyzes the aldol condensation of 2 molecules of pyruvic acid to yield the intermediate 4-hydroxyl-4-methyl-2-oxoglutarate (HMOG), which can then be stereoselectively transaminated by an unidentified enzyme to form HMG. The Diels-Alderase cghA then uses the Dieckmann product released by cghG as substrate and catalyzes the Diels-Alder cycloaddition to form the decalin ring of Sch210972. CghA also suppresses the nonenzymatic formation of the alternative stereoisomer. The chain is 4-hydroxy-4-methyl-2-oxoglutarate aldolase cghB from Chaetomium globosum (strain ATCC 6205 / CBS 148.51 / DSM 1962 / NBRC 6347 / NRRL 1970) (Soil fungus).